The chain runs to 255 residues: Acetyl-coenzyme A carboxylase carboxyl transferase subunit alpha (255 aa).

The CoA carboxyltransferase C-terminal domain occupies 1–235 (MNIAKIVREA…KKELQTELAR (235 aa)).

Belongs to the AccA family. In terms of assembly, acetyl-CoA carboxylase is a heterohexamer composed of biotin carboxyl carrier protein (AccB), biotin carboxylase (AccC) and two subunits each of ACCase subunit alpha (AccA) and ACCase subunit beta (AccD).

It localises to the cytoplasm. The catalysed reaction is N(6)-carboxybiotinyl-L-lysyl-[protein] + acetyl-CoA = N(6)-biotinyl-L-lysyl-[protein] + malonyl-CoA. It functions in the pathway lipid metabolism; malonyl-CoA biosynthesis; malonyl-CoA from acetyl-CoA: step 1/1. Its function is as follows. Component of the acetyl coenzyme A carboxylase (ACC) complex. First, biotin carboxylase catalyzes the carboxylation of biotin on its carrier protein (BCCP) and then the CO(2) group is transferred by the carboxyltransferase to acetyl-CoA to form malonyl-CoA. The polypeptide is Acetyl-coenzyme A carboxylase carboxyl transferase subunit alpha (Streptococcus pneumoniae (strain CGSP14)).